The chain runs to 280 residues: 3-hydroxyanthranilate 3,4-dioxygenase (280 aa).

The interval methionine 1–aspartate 160 is domain A (catalytic). Arginine 43 contacts O2. The Fe cation site is built by histidine 47, glutamate 53, and histidine 91. Position 53 (glutamate 53) interacts with substrate. The substrate site is built by arginine 95 and glutamate 105. Residues proline 161 to valine 177 are linker. The interval methionine 178–alanine 280 is domain B.

This sequence belongs to the 3-HAO family. As to quaternary structure, monomer. It depends on Fe(2+) as a cofactor.

The protein resides in the cytoplasm. Its subcellular location is the cytosol. The enzyme catalyses 3-hydroxyanthranilate + O2 = (2Z,4Z)-2-amino-3-carboxymuconate 6-semialdehyde. The protein operates within cofactor biosynthesis; NAD(+) biosynthesis; quinolinate from L-kynurenine: step 3/3. Its function is as follows. Catalyzes the oxidative ring opening of 3-hydroxyanthranilate to 2-amino-3-carboxymuconate semialdehyde, which spontaneously cyclizes to quinolinate. In Xenopus tropicalis (Western clawed frog), this protein is 3-hydroxyanthranilate 3,4-dioxygenase (haao).